Consider the following 712-residue polypeptide: Envelope glycoprotein gp160 (712 aa).

The signal sequence occupies residues 1–24; that stretch reads MCGRNQLFVASLLASACLIYCVQY. The Extracellular segment spans residues 25 to 673; sequence VTVFYGVPVW…LTSWIKYIQY (649 aa). Asparagine 36 carries N-linked (GlcNAc...) asparagine; by host glycosylation. Cysteine 43 and cysteine 56 are disulfide-bonded. N-linked (GlcNAc...) asparagine; by host glycans are attached at residues asparagine 69, asparagine 78, asparagine 113, asparagine 119, asparagine 131, asparagine 137, asparagine 145, asparagine 160, asparagine 173, asparagine 200, asparagine 232, asparagine 235, asparagine 242, asparagine 266, asparagine 272, asparagine 283, asparagine 294, asparagine 304, asparagine 359, asparagine 392, asparagine 402, asparagine 405, asparagine 442, asparagine 457, and asparagine 460. 5 disulfide bridges follow: cysteine 100–cysteine 208, cysteine 107–cysteine 199, cysteine 112–cysteine 157, cysteine 221–cysteine 251, and cysteine 231–cysteine 243. Residues 112-156 are V1; that stretch reads CNSTTAKNTTSTPTTTTTANTTIGENSSCIRTDNCTGLGEEEMVD. The tract at residues 157–199 is V2; that stretch reads CQFNMTGLERDKKKLYNETWYSKDVVCESKDTKKEKTCYMNHC. The segment at 299–331 is V3; the sequence is CKRPGNKTVVPITLMSGLVFHSQPINRRPRQAW. Cysteines 299 and 332 form a disulfide. Disulfide bonds link cysteine 384/cysteine 441 and cysteine 391/cysteine 414. The V4 stretch occupies residues 391 to 414; it reads CNMTWFLNWVENRTNQTQHNYVPC. Residues 457 to 463 form a V5 region; sequence NQTNITF. The segment at 506-526 is fusion peptide; it reads GVFVLGFLGFLTTAGAAMGAA. Residues 569–585 form an immunosuppression region; sequence LQARVTAIEKYLKDQAQ. N-linked (GlcNAc...) asparagine; by host glycans are attached at residues asparagine 605, asparagine 614, and asparagine 630. Residues 614 to 646 are a coiled coil; the sequence is NITWQEWEQRIRNLEANISESLEQAQIQQEKNM. Residues 651-672 are MPER; binding to GalCer; it reads KLNSWDVFSNWFDLTSWIKYIQ. Residues 674–694 form a helical membrane-spanning segment; sequence GVYIVVGIIVLRMVIYVVQML. Over 695 to 712 the chain is Cytoplasmic; it reads SRLRKGYRPVFSSPPAYS. Residues 701 to 704 carry the YXXV motif; contains endocytosis signal motif; sequence YRPV.

The mature envelope protein (Env) consists of a homotrimer of non-covalently associated gp120-gp41 heterodimers. The resulting complex protrudes from the virus surface as a spike. There seems to be as few as 10 spikes on the average virion. Interacts with human CD4, CCR5 and CXCR4, to form a P4HB/PDI-CD4-CXCR4-gp120 complex. Gp120 also interacts with the C-type lectins CD209/DC-SIGN and CLEC4M/DC-SIGNR (collectively referred to as DC-SIGN(R)). Gp120 and gp41 interact with GalCer. In terms of assembly, the mature envelope protein (Env) consists of a homotrimer of non-covalently associated gp120-gp41 heterodimers. The resulting complex protrudes from the virus surface as a spike. There seems to be as few as 10 spikes on the average virion. In terms of processing, specific enzymatic cleavages in vivo yield mature proteins. Envelope glycoproteins are synthesized as an inactive precursor that is heavily N-glycosylated and processed likely by host cell furin in the Golgi to yield the mature SU and TM proteins. The cleavage site between SU and TM requires the minimal sequence [KR]-X-[KR]-R.

Its subcellular location is the virion membrane. It is found in the host cell membrane. The protein localises to the host endosome membrane. Functionally, the surface protein gp120 (SU) attaches the virus to the host lymphoid cell by binding to the primary receptor CD4. This interaction induces a structural rearrangement creating a high affinity binding site for a chemokine coreceptor like CXCR4 and/or CCR5. This peculiar 2 stage receptor-interaction strategy allows gp120 to maintain the highly conserved coreceptor-binding site in a cryptic conformation, protected from neutralizing antibodies. Since CD4 also displays a binding site for the disulfide-isomerase P4HB/PDI, a P4HB/PDI-CD4-CXCR4-gp120 complex may form. In that complex, P4HB/PDI could reach and reduce gp120 disulfide bonds, causing major conformational changes in gp120. TXN, another PDI family member could also be involved in disulfide rearrangements in Env during fusion. These changes are transmitted to the transmembrane protein gp41 and are thought to activate its fusogenic potential by unmasking its fusion peptide. The surface protein gp120 is a ligand for CD209/DC-SIGN and CLEC4M/DC-SIGNR, which are respectively found on dendritic cells (DCs), and on endothelial cells of liver sinusoids and lymph node sinuses. These interactions allow capture of viral particles at mucosal surfaces by these cells and subsequent transmission to permissive cells. DCs are professional antigen presenting cells, critical for host immunity by inducing specific immune responses against a broad variety of pathogens. They act as sentinels in various tissues where they take up antigen, process it, and present it to T-cells following migration to lymphoid organs. HIV subverts the migration properties of dendritic cells to gain access to CD4+ T-cells in lymph nodes. Virus transmission to permissive T-cells occurs either in trans (without DCs infection, through viral capture and transmission), or in cis (following DCs productive infection, through the usual CD4-gp120 interaction), thereby inducing a robust infection. In trans infection, bound virions remain infectious over days and it is proposed that they are not degraded, but protected in non-lysosomal acidic organelles within the DCs close to the cell membrane thus contributing to the viral infectious potential during DCs' migration from the periphery to the lymphoid tissues. On arrival at lymphoid tissues, intact virions recycle back to DCs' cell surface allowing virus transmission to CD4+ T-cells. Virion capture also seems to lead to MHC-II-restricted viral antigen presentation, and probably to the activation of HIV-specific CD4+ cells. Its function is as follows. The transmembrane protein gp41 (TM) acts as a class I viral fusion protein. Under the current model, the protein has at least 3 conformational states: pre-fusion native state, pre-hairpin intermediate state, and post-fusion hairpin state. During fusion of viral and target intracellular membranes, the coiled coil regions (heptad repeats) assume a trimer-of-hairpins structure, positioning the fusion peptide in close proximity to the C-terminal region of the ectodomain. The formation of this structure appears to drive apposition and subsequent fusion of viral and target cell membranes. Complete fusion occurs in host cell endosomes and is dynamin-dependent, however some lipid transfer might occur at the plasma membrane. The virus undergoes clathrin-dependent internalization long before endosomal fusion, thus minimizing the surface exposure of conserved viral epitopes during fusion and reducing the efficacy of inhibitors targeting these epitopes. Membranes fusion leads to delivery of the nucleocapsid into the cytoplasm. In terms of biological role, the envelope glycoprotein gp160 precursor down-modulates cell surface CD4 antigen by interacting with it in the endoplasmic reticulum and blocking its transport to the cell surface. Functionally, the gp120-gp41 heterodimer seems to contribute to T-cell depletion during HIV-1 infection. The envelope glycoproteins expressed on the surface of infected cells induce apoptosis through an interaction with uninfected cells expressing the receptor (CD4) and the coreceptors CXCR4 or CCR5. This type of bystander killing may be obtained by at least three distinct mechanisms. First, the interaction between the 2 cells can induce cellular fusion followed by nuclear fusion within the syncytium. Syncytia are condemned to die from apoptosis. Second, the 2 interacting cells may not fuse entirely and simply exchange plasma membrane lipids, after a sort of hemifusion process, followed by rapid death. Third, it is possible that virus-infected cells, on the point of undergoing apoptosis, fuse with CD4-expressing cells, in which case apoptosis is rapidly transmitted from one cell to the other and thus occurs in a sort of contagious fashion. The gp120-gp41 heterodimer allows rapid transcytosis of the virus through CD4 negative cells such as simple epithelial monolayers of the intestinal, rectal and endocervical epithelial barriers. Both gp120 and gp41 specifically recognize glycosphingolipids galactosyl-ceramide (GalCer) or 3' sulfo-galactosyl-ceramide (GalS) present in the lipid rafts structures of epithelial cells. Binding to these alternative receptors allows the rapid transcytosis of the virus through the epithelial cells. This transcytotic vesicle-mediated transport of virions from the apical side to the basolateral side of the epithelial cells does not involve infection of the cells themselves. This chain is Envelope glycoprotein gp160 (env), found in Homo sapiens (Human).